The primary structure comprises 540 residues: Putative rhamnogalacturonase (540 aa).

The signal sequence occupies residues 1–23; that stretch reads MGFLTLFHMAFLAVSLFVSGALA. 2 cysteine pairs are disulfide-bonded: C53–C100 and C192–C203. An N-linked (GlcNAc...) asparagine glycan is attached at N89. N368 carries an N-linked (GlcNAc...) asparagine glycan.

This sequence belongs to the polysaccharide lyase 4 family.

It localises to the secreted. It catalyses the reaction Endotype eliminative cleavage of L-alpha-rhamnopyranosyl-(1-&gt;4)-alpha-D-galactopyranosyluronic acid bonds of rhamnogalacturonan I domains in ramified hairy regions of pectin leaving L-rhamnopyranose at the reducing end and 4-deoxy-4,5-unsaturated D-galactopyranosyluronic acid at the non-reducing end.. Its function is as follows. Could be a pectinolytic enzyme that hydrolyzes the alpha-L-rhamnopyranosyl-(1,4)-alpha-D-galacturonopyranosyl glycosidic linkage by beta-elimination, thereby generating oligosaccharides terminating at the non-reducing end with a hex-4-enopyranosyluronic acid residue. This is Putative rhamnogalacturonase (asd-1) from Neurospora crassa (strain ATCC 24698 / 74-OR23-1A / CBS 708.71 / DSM 1257 / FGSC 987).